We begin with the raw amino-acid sequence, 157 residues long: Stalk-specific protein B (157 aa).

Residues 1–19 (MRSILILLSLLLTIAFASA) form the signal peptide.

Its subcellular location is the secreted. The polypeptide is Stalk-specific protein B (staB) (Dictyostelium discoideum (Social amoeba)).